The sequence spans 91 residues: Small ribosomal subunit protein bS16 (91 aa).

It belongs to the bacterial ribosomal protein bS16 family.

The polypeptide is Small ribosomal subunit protein bS16 (Limosilactobacillus fermentum (strain NBRC 3956 / LMG 18251) (Lactobacillus fermentum)).